The primary structure comprises 160 residues: Putative transcriptional regulator protein YobU (160 aa).

This is Putative transcriptional regulator protein YobU (yobU) from Bacillus subtilis (strain 168).